The chain runs to 494 residues: WD repeat-containing protein 37 (494 aa).

The interval 1-38 (MPTESGSWAAARQTKQKRKSHSLSIKRTNSSEQDRPGL) is disordered. The segment covering 22 to 31 (SLSIKRTNSS) has biased composition (polar residues). WD repeat units lie at residues 154–194 (GHRD…CLIK) and 197–236 (GHAG…PTPQ). The interval 236–266 (QPTADTSISGEEEVDFSDKDENDGDGDASSD) is disordered. The segment covering 245–263 (GEEEVDFSDKDENDGDGDA) has biased composition (acidic residues). WD repeat units follow at residues 279-318 (SHQG…LVHS), 321-360 (GHDQ…IHSV), 365-403 (GHTD…SPIA), 406-445 (RTDS…LARL), and 452-493 (GHRR…LLQE).

It localises to the cytoplasm. The protein localises to the nucleus. The sequence is that of WD repeat-containing protein 37 (wdr37) from Xenopus tropicalis (Western clawed frog).